The chain runs to 396 residues: Purine ribonucleoside efflux pump NepI (396 aa).

Topologically, residues 1 to 21 are cytoplasmic; it reads MSEFIAENRGADAITRPNWSA. Residues 22–42 form a helical membrane-spanning segment; that stretch reads VFSVAFCVACLIIVEFLPVSL. At 43–54 the chain is on the periplasmic side; sequence LTPMAQDLGISE. Residues 55-75 traverse the membrane as a helical segment; sequence GVAGQSVTVTAFVAMFASLFI. Topologically, residues 76–85 are cytoplasmic; sequence TQTIQATDRR. Residues 86 to 106 form a helical membrane-spanning segment; sequence YVVILFAVLLTLSCLLVSFAN. Residue S107 is a topological domain, periplasmic. The helical transmembrane segment at 108 to 128 threads the bilayer; that stretch reads FSLLLIGRACLGLALGGFWAM. Topologically, residues 129 to 147 are cytoplasmic; the sequence is SASLTMRLVPPRTVPKALS. Residues 148 to 168 form a helical membrane-spanning segment; the sequence is VIFGAVSIALVIAAPLGCFLG. The Periplasmic segment spans residues 169 to 175; the sequence is ELIGWRN. Residues 176-196 form a helical membrane-spanning segment; it reads VFNAAAAMGVLCIFWIIKSLP. Topologically, residues 197 to 215 are cytoplasmic; that stretch reads SLPGEPSHQKQNTFRLLQR. The helical transmembrane segment at 216-236 threads the bilayer; that stretch reads PGVMAGMIAIFMSFAGQFAFF. Over 237 to 255 the chain is Periplasmic; it reads TYIRPVYMTLAGFGVDGLT. A helical membrane pass occupies residues 256–276; the sequence is LVLLSFGIASFVGTSLSSFIL. Over 277–281 the chain is Cytoplasmic; sequence KRSVK. The helical transmembrane segment at 282–302 threads the bilayer; that stretch reads LALAGAPFVLALSALVLTLWG. Residues 303 to 305 are Periplasmic-facing; it reads SDK. A helical membrane pass occupies residues 306 to 326; the sequence is IVATGVAIIWGLTFALIPVGW. At 327-343 the chain is on the cytoplasmic side; the sequence is STWITRSLADQAEKAGS. A helical membrane pass occupies residues 344-364; it reads IQVAVIQLANTCGAAIGGYAL. Residues 365 to 366 lie on the Periplasmic side of the membrane; the sequence is DN. A helical membrane pass occupies residues 367-387; it reads IGLTSPLMLSGTLMLLTALLV. The Cytoplasmic portion of the chain corresponds to 388–396; that stretch reads TAKVKMKKS.

Belongs to the major facilitator superfamily. DHA1 family. NepI (TC 2.A.1.2.26) subfamily.

Its subcellular location is the cell inner membrane. The catalysed reaction is inosine(in) + H(+)(out) = inosine(out) + H(+)(in). It carries out the reaction guanosine(in) + H(+)(out) = guanosine(out) + H(+)(in). Involved in the efflux of purine ribonucleosides, such as inosine and guanosine. The polypeptide is Purine ribonucleoside efflux pump NepI (Escherichia coli O157:H7).